The following is a 644-amino-acid chain: Prolyl 3,4-dihydroxylase TPA1 (644 aa).

A Fe2OG dioxygenase domain is found at 141–247 (SKTDMSINTY…RLSIQGWYHI (107 aa)). Fe cation-binding residues include histidine 159 and aspartate 161. Tyrosine 173 provides a ligand contact to 2-oxoglutarate. Histidine 227 contacts Fe cation. Residue arginine 238 participates in 2-oxoglutarate binding. At serine 607 the chain carries Phosphoserine.

The protein belongs to the TPA1 family. As to quaternary structure, monomer and homodimer. Interacts with FRK1, eRF1 (SUP1), eRF3 (SUP35) and polyadenylate-binding protein PAB1. Interacts with ETT1. Fe(2+) serves as cofactor. The cofactor is L-ascorbate.

The protein resides in the nucleus. The catalysed reaction is [ribosomal protein uS12]-L-proline + 2-oxoglutarate + O2 = [ribosomal protein uS12]-(3S)-3-hydroxy-L-proline + succinate + CO2. The enzyme catalyses [ribosomal protein uS12]-(3S)-3-hydroxy-L-proline + 2-oxoglutarate + O2 = [ribosomal protein uS12]-(3S)-3,4-dihydroxy-L-proline + succinate + CO2. Its function is as follows. Prolyl 3,4-dihydroxylase that catalyzes 3,4-dihydroxylation of 'Pro-64' of small ribosomal subunit uS12 (RPS23A and RPS23B), thereby regulating protein translation termination efficiency. Part of a messenger ribonucleoprotein (mRNP) complex at the 3'-UTR of mRNAs. It associates specifically with components of the translation termination complex and is involved in both translation termination and in regulation of normal mRNA decay through translation termination-coupled poly(A) shortening. The polypeptide is Prolyl 3,4-dihydroxylase TPA1 (Saccharomyces cerevisiae (strain ATCC 204508 / S288c) (Baker's yeast)).